The following is a 336-amino-acid chain: HTH-type transcriptional regulator CdhR (336 aa).

The HTH araC/xylS-type domain occupies 213 to 311 (VQVIGEMERH…AASPSQDRAV (99 aa)). 2 consecutive DNA-binding regions (H-T-H motif) follow at residues 230–251 (LELAERIQVTRRQLERLFRVHL) and 278–301 (VLQVSLACGFESPSYFSRSYRARF). The tract at residues 305 to 336 (PSQDRAVLPLKAPAATPPGAPAGHRTPRAERG) is disordered.

Induces the transcription of the PA5384-PA5388 operon in response to carnitine. This operon is involved in the degradation of L-carnitine, and allows P.aeruginosa to grow on L-carnitine as the sole source of carbon and nitrogen. The chain is HTH-type transcriptional regulator CdhR (cdhR) from Pseudomonas aeruginosa (strain ATCC 15692 / DSM 22644 / CIP 104116 / JCM 14847 / LMG 12228 / 1C / PRS 101 / PAO1).